Consider the following 416-residue polypeptide: Phosphoglycerate kinase (416 aa).

(2R)-3-phosphoglycerate is bound by residues Val-23, Asp-24, Phe-25, Asn-26, Gln-38, Arg-39, Ser-62, His-63, Gly-65, Arg-66, Leu-121, Arg-122, His-168, and Arg-169. Gly-212 contributes to the ADP binding site. Residue Gly-212 coordinates CDP. Positions 213 and 214 each coordinate AMP. Position 213 (Ala-213) interacts with ATP. Position 213 (Ala-213) interacts with Mg(2+). Asp-217 contacts CDP. Asp-217 serves as a coordination point for Mg(2+). Lys-218 contributes to the AMP binding site. Lys-218 provides a ligand contact to ATP. Gly-236 contributes to the ADP binding site. Gly-236 is a CDP binding site. AMP is bound by residues Gly-237 and Gly-311. Residues Gly-237 and Gly-311 each coordinate ATP. Positions 336 and 341 each coordinate CDP. Phe-341 is an ADP binding site. Position 342 (Glu-342) interacts with AMP. Residues Glu-342, Asp-373, and Thr-374 each contribute to the ATP site. Asp-373 is a binding site for Mg(2+).

This sequence belongs to the phosphoglycerate kinase family. In terms of assembly, monomer. Requires Mg(2+) as cofactor.

It is found in the cytoplasm. Its subcellular location is the mitochondrion. The catalysed reaction is (2R)-3-phosphoglycerate + ATP = (2R)-3-phospho-glyceroyl phosphate + ADP. It functions in the pathway carbohydrate degradation; glycolysis; pyruvate from D-glyceraldehyde 3-phosphate: step 2/5. Functionally, catalyzes one of the two ATP producing reactions in the glycolytic pathway via the reversible conversion of 1,3-diphosphoglycerate to 3-phosphoglycerate. Both L- and D- forms of purine and pyrimidine nucleotides can be used as substrates, but the activity is much lower on pyrimidines. Negatively regulates the biosynthesis of acetyl-CoA from pyruvate in the mitochondrion. This is Phosphoglycerate kinase (PGK1) from Komagataella pastoris (Yeast).